We begin with the raw amino-acid sequence, 577 residues long: Galectin-3-binding protein (577 aa).

The first 18 residues, 1–18 (MALLWLLSVFLLVPGTQG), serve as a signal peptide directing secretion. An SRCR domain is found at 24–124 (MRLVNGASAN…HEKDAGVVCS (101 aa)). Disulfide bonds link Cys49–Cys113, Cys62–Cys123, and Cys93–Cys103. N-linked (GlcNAc...) asparagine glycosylation is present at Asn69. A glycan (N-linked (GlcNAc...) asparagine) is linked at Asn125. Positions 153 to 221 (CDLFIQVTGQ…FYSRRIEVSM (69 aa)) constitute a BTB domain. In terms of domain architecture, BACK spans 260-360 (PLDLYAYARA…MLPQELFELQ (101 aa)). 4 N-linked (GlcNAc...) asparagine glycosylation sites follow: Asn362, Asn398, Asn543, and Asn572.

In terms of assembly, homodimers and homomultimers. The multimers form ring-like structures with a diameter of 30-40 nm. Binds LGALS1 and LGALS3. Binds ITGB1, COL4A1, COL5A1, COL6A1, FN1 and NID. Interacts with PPIC (in vitro). The unglycosylated form interacts with PDE4DIP isoform 2/MMG8/SMYLE; this interaction may connect a pericentrosomal complex to the gamma-tubulin ring complex (gamma-TuRC) to promote microtubule assembly and acetylation. In terms of processing, N-glycosylated. As to expression, detected in embryo, liver, spleen, kidney, lung, heart, intestine, thymus and lymph node.

It is found in the secreted. The protein resides in the extracellular space. The protein localises to the extracellular matrix. In terms of biological role, promotes integrin-mediated cell adhesion. May stimulate host defense against viruses and tumor cells. The protein is Galectin-3-binding protein (Lgals3bp) of Mus musculus (Mouse).